Consider the following 158-residue polypeptide: NADPH-dependent 7-cyano-7-deazaguanine reductase (158 aa).

A disordered region spans residues 1–37; that stretch reads MAKRSIKSETSPELQLGRPVTAPDSPETARLDRVPNP. A compositionally biased stretch (basic and acidic residues) spans 27–37; that stretch reads ETARLDRVPNP. Catalysis depends on C56, which acts as the Thioimide intermediate. The Proton donor role is filled by D63. Substrate contacts are provided by residues 78–80 and 97–98; these read VES and HE.

It belongs to the GTP cyclohydrolase I family. QueF type 1 subfamily.

Its subcellular location is the cytoplasm. It catalyses the reaction 7-aminomethyl-7-carbaguanine + 2 NADP(+) = 7-cyano-7-deazaguanine + 2 NADPH + 3 H(+). Its pathway is tRNA modification; tRNA-queuosine biosynthesis. Functionally, catalyzes the NADPH-dependent reduction of 7-cyano-7-deazaguanine (preQ0) to 7-aminomethyl-7-deazaguanine (preQ1). This chain is NADPH-dependent 7-cyano-7-deazaguanine reductase, found in Bradyrhizobium sp. (strain BTAi1 / ATCC BAA-1182).